The chain runs to 248 residues: 14-3-3-like protein G-BOX factor 14 kappa (248 aa).

A phosphoserine mark is found at Ser70, Ser112, and Ser193. Residue Thr214 is modified to Phosphothreonine.

This sequence belongs to the 14-3-3 family. In terms of assembly, interacts with the isocitrate dehydrogenase IDH3, and malate dehydrogenases MDH1 and MDH2. Interacts with CINV1.

Its subcellular location is the nucleus. The protein localises to the cytoplasm. In terms of biological role, is associated with a DNA binding complex that binds to the G box, a well-characterized cis-acting DNA regulatory element found in plant genes. Involved in the regulation of nutrient metabolism. Negative regulator of freezing tolerance that modulates cold-responsive C-repeat-binding factors (CBF) DREB1A AND DREB1B proteins stability by facilitating their ubiquitin-mediated degradation; this processus is counteracted by B1L. This is 14-3-3-like protein G-BOX factor 14 kappa from Arabidopsis thaliana (Mouse-ear cress).